A 247-amino-acid chain; its full sequence is Small ribosomal subunit protein uS2 (247 aa).

Belongs to the universal ribosomal protein uS2 family.

The sequence is that of Small ribosomal subunit protein uS2 from Halorhodospira halophila (strain DSM 244 / SL1) (Ectothiorhodospira halophila (strain DSM 244 / SL1)).